A 325-amino-acid chain; its full sequence is Tagatose 1,6-diphosphate aldolase 1 (325 aa).

Belongs to the aldolase LacD family.

The enzyme catalyses D-tagatofuranose 1,6-bisphosphate = D-glyceraldehyde 3-phosphate + dihydroxyacetone phosphate. It functions in the pathway carbohydrate metabolism; D-tagatose 6-phosphate degradation; D-glyceraldehyde 3-phosphate and glycerone phosphate from D-tagatose 6-phosphate: step 2/2. The chain is Tagatose 1,6-diphosphate aldolase 1 (lacD1) from Streptococcus mutans serotype c (strain ATCC 700610 / UA159).